Reading from the N-terminus, the 474-residue chain is Viral protein TPX (474 aa).

A disordered region spans residues 268-474; it reads VTVTPISSPS…TPTSTTSSNI (207 aa). Residues 275-365 are compositionally biased toward pro residues; that stretch reads SPSPTPTPTP…PTPTPTPTPT (91 aa). A Thr-Pro(N) repeat occupies 278–367; that stretch reads PTPTPTPTPT…PTPTPTPTPT (90 aa). The 3 Thr-Pro repeats regions and two near identical repeats stretch occupies residues 278-467; sequence PTPTPTPTPT…PTPTPTPTPT (190 aa). Positions 368 to 377 form a repeat; the sequence is YDITYVVFDV. A Thr-Pro(N) repeat occupies 378–436; it reads TPSPTPTPTPTPTPTPTPTPTPTPTPTPTPTPTPTPTPTPTPTPTPTPTPTPTPTPTPT. The span at 380-434 shows a compositional bias: pro residues; that stretch reads SPTPTPTPTPTPTPTPTPTPTPTPTPTPTPTPTPTPTPTPTPTPTPTPTPTPTPT. The stretch at residues 437 to 446 is a repeat; that stretch reads YDITYVIFDV. A Thr-Pro(N) repeat occupies 447–467; that stretch reads TPSPTPTPTPTPTPTPTPTPT. Positions 449 to 465 are enriched in pro residues; sequence SPTPTPTPTPTPTPTPT.

The sequence is that of Viral protein TPX from Thermoproteus tenax virus 1 (strain VT3) (TTV1).